Reading from the N-terminus, the 137-residue chain is Large ribosomal subunit protein uL16c (137 aa).

Belongs to the universal ribosomal protein uL16 family. Part of the 50S ribosomal subunit.

The protein localises to the plastid. The protein resides in the chloroplast. The protein is Large ribosomal subunit protein uL16c of Trieres chinensis (Marine centric diatom).